We begin with the raw amino-acid sequence, 691 residues long: Elongation factor G (691 aa).

In terms of domain architecture, tr-type G spans 8–283; the sequence is EDYRNFGIMA…AVVDYLPSPA (276 aa). GTP-binding positions include 17–24, 81–85, and 135–138; these read AHIDAGKT, DTPGH, and NKMD.

Belongs to the TRAFAC class translation factor GTPase superfamily. Classic translation factor GTPase family. EF-G/EF-2 subfamily.

The protein localises to the cytoplasm. Its function is as follows. Catalyzes the GTP-dependent ribosomal translocation step during translation elongation. During this step, the ribosome changes from the pre-translocational (PRE) to the post-translocational (POST) state as the newly formed A-site-bound peptidyl-tRNA and P-site-bound deacylated tRNA move to the P and E sites, respectively. Catalyzes the coordinated movement of the two tRNA molecules, the mRNA and conformational changes in the ribosome. This is Elongation factor G from Methylobacterium sp. (strain 4-46).